Reading from the N-terminus, the 465-residue chain is Na(+)-translocating NADH-quinone reductase subunit A (465 aa).

It belongs to the NqrA family. In terms of assembly, composed of six subunits; NqrA, NqrB, NqrC, NqrD, NqrE and NqrF.

It carries out the reaction a ubiquinone + n Na(+)(in) + NADH + H(+) = a ubiquinol + n Na(+)(out) + NAD(+). NQR complex catalyzes the reduction of ubiquinone-1 to ubiquinol by two successive reactions, coupled with the transport of Na(+) ions from the cytoplasm to the periplasm. NqrA to NqrE are probably involved in the second step, the conversion of ubisemiquinone to ubiquinol. This Chlamydia trachomatis serovar L2 (strain ATCC VR-902B / DSM 19102 / 434/Bu) protein is Na(+)-translocating NADH-quinone reductase subunit A.